The following is an 82-amino-acid chain: Apovitellenin-1 (82 aa).

The protein belongs to the apovitellenin family. Monomer. In terms of tissue distribution, found in egg yolk and in plasma.

In terms of biological role, protein component of the very low density lipoprotein (VLDL) of egg-laying females. Potent lipoprotein lipase inhibitor, preventing the loss of triglycerides from VLDL on their way from the liver to the growing oocytes. The polypeptide is Apovitellenin-1 (Meleagris gallopavo (Wild turkey)).